A 794-amino-acid polypeptide reads, in one-letter code: Mitochondrial intermediate peptidase (794 aa).

The transit peptide at 1-39 (MRVTSSRLLQGGSLVSRVLKRRLNNASRTKKGWFSTRTL) directs the protein to the mitochondrion. A Zn(2+)-binding site is contributed by His-581. Glu-582 is a catalytic residue. His-585 and His-588 together coordinate Zn(2+).

Belongs to the peptidase M3 family. The cofactor is Zn(2+).

The protein localises to the mitochondrion matrix. The catalysed reaction is Release of an N-terminal octapeptide as second stage of processing of some proteins imported into the mitochondrion.. In terms of biological role, cleaves proteins, imported into the mitochondrion, to their mature size. While most mitochondrial precursor proteins are processed to the mature form in one step by mitochondrial processing peptidase (MPP), the sequential cleavage by MIP of an octapeptide after initial processing by MPP is a required step for a subgroup of nuclear-encoded precursor proteins destined for the matrix or the inner membrane. The chain is Mitochondrial intermediate peptidase (OCT1) from Debaryomyces hansenii (strain ATCC 36239 / CBS 767 / BCRC 21394 / JCM 1990 / NBRC 0083 / IGC 2968) (Yeast).